The primary structure comprises 232 residues: Polycomb group RING finger protein 5-B (232 aa).

The segment at 18–57 adopts an RING-type zinc-finger fold; the sequence is CFVCKGYLIKPTTVTECLHTFCKSCIVQHFEDSNDCPKCG. Positions 93–104 are enriched in basic and acidic residues; that stretch reads QEDEFWRRKESN. Positions 93–128 are disordered; that stretch reads QEDEFWRRKESNDENGPMCKKRRVDEEDDDKGDGDY.

In terms of assembly, component of a PRC1-like complex.

The protein localises to the nucleus. In terms of biological role, component of Polycomb group (PcG) multiprotein complexes; the complex class is required to maintain the transcriptionally repressive state of some genes. This is Polycomb group RING finger protein 5-B (pcgf5b) from Danio rerio (Zebrafish).